The sequence spans 280 residues: Aspartate/glutamate leucyltransferase (280 aa).

The protein belongs to the R-transferase family. Bpt subfamily.

It localises to the cytoplasm. The catalysed reaction is N-terminal L-glutamyl-[protein] + L-leucyl-tRNA(Leu) = N-terminal L-leucyl-L-glutamyl-[protein] + tRNA(Leu) + H(+). It carries out the reaction N-terminal L-aspartyl-[protein] + L-leucyl-tRNA(Leu) = N-terminal L-leucyl-L-aspartyl-[protein] + tRNA(Leu) + H(+). Its function is as follows. Functions in the N-end rule pathway of protein degradation where it conjugates Leu from its aminoacyl-tRNA to the N-termini of proteins containing an N-terminal aspartate or glutamate. This is Aspartate/glutamate leucyltransferase from Cereibacter sphaeroides (strain ATCC 17023 / DSM 158 / JCM 6121 / CCUG 31486 / LMG 2827 / NBRC 12203 / NCIMB 8253 / ATH 2.4.1.) (Rhodobacter sphaeroides).